A 124-amino-acid polypeptide reads, in one-letter code: MPTINQLIRKGREQVVYKSTAPALKECPQKRGVCTRVYTTTPKKPNSALRKVARVRLTNGIEVTSYIPGIGHNLQEHSVVLVRGGRVKDLPGVRYHIVRGALDSAGVQNRNRGRSKYGTKRPKK.

Asp89 is subject to 3-methylthioaspartic acid. The interval 104–124 (SAGVQNRNRGRSKYGTKRPKK) is disordered. Residues 111–124 (NRGRSKYGTKRPKK) show a composition bias toward basic residues.

This sequence belongs to the universal ribosomal protein uS12 family. Part of the 30S ribosomal subunit. Contacts proteins S8 and S17. May interact with IF1 in the 30S initiation complex.

With S4 and S5 plays an important role in translational accuracy. Its function is as follows. Interacts with and stabilizes bases of the 16S rRNA that are involved in tRNA selection in the A site and with the mRNA backbone. Located at the interface of the 30S and 50S subunits, it traverses the body of the 30S subunit contacting proteins on the other side and probably holding the rRNA structure together. The combined cluster of proteins S8, S12 and S17 appears to hold together the shoulder and platform of the 30S subunit. The sequence is that of Small ribosomal subunit protein uS12 from Desulforamulus reducens (strain ATCC BAA-1160 / DSM 100696 / MI-1) (Desulfotomaculum reducens).